Reading from the N-terminus, the 142-residue chain is ATP synthase epsilon chain (142 aa).

This sequence belongs to the ATPase epsilon chain family. As to quaternary structure, F-type ATPases have 2 components, CF(1) - the catalytic core - and CF(0) - the membrane proton channel. CF(1) has five subunits: alpha(3), beta(3), gamma(1), delta(1), epsilon(1). CF(0) has three main subunits: a, b and c.

Its subcellular location is the cell inner membrane. Functionally, produces ATP from ADP in the presence of a proton gradient across the membrane. The sequence is that of ATP synthase epsilon chain from Shewanella sediminis (strain HAW-EB3).